Here is a 315-residue protein sequence, read N- to C-terminus: Biotin synthase (315 aa).

In terms of domain architecture, Radical SAM core spans 39 to 266 (NSLQFATLLS…KSAIRLTAGR (228 aa)). [4Fe-4S] cluster is bound by residues Cys-54, Cys-58, and Cys-61. Positions 98, 129, 189, and 261 each coordinate [2Fe-2S] cluster.

It belongs to the radical SAM superfamily. Biotin synthase family. Homodimer. [4Fe-4S] cluster is required as a cofactor. [2Fe-2S] cluster serves as cofactor.

It catalyses the reaction (4R,5S)-dethiobiotin + (sulfur carrier)-SH + 2 reduced [2Fe-2S]-[ferredoxin] + 2 S-adenosyl-L-methionine = (sulfur carrier)-H + biotin + 2 5'-deoxyadenosine + 2 L-methionine + 2 oxidized [2Fe-2S]-[ferredoxin]. It participates in cofactor biosynthesis; biotin biosynthesis; biotin from 7,8-diaminononanoate: step 2/2. In terms of biological role, catalyzes the conversion of dethiobiotin (DTB) to biotin by the insertion of a sulfur atom into dethiobiotin via a radical-based mechanism. This Legionella pneumophila (strain Paris) protein is Biotin synthase.